Reading from the N-terminus, the 338-residue chain is Glyceraldehyde-3-phosphate dehydrogenase GAPC2, cytosolic (338 aa).

NAD(+) contacts are provided by residues 15-16 (RI), Asp-37, and Arg-84. 155 to 157 (SCT) contacts D-glyceraldehyde 3-phosphate. The active-site Nucleophile is Cys-156. Position 156 is an S-glutathionyl cysteine; transient; alternate (Cys-156). Cys-156 is subject to S-nitrosocysteine; transient; alternate. An S-nitrosocysteine; transient modification is found at Cys-160. D-glyceraldehyde 3-phosphate is bound by residues Thr-186, 215 to 216 (TG), and Arg-238. Asn-320 lines the NAD(+) pocket.

It belongs to the glyceraldehyde-3-phosphate dehydrogenase family. In terms of assembly, homotetramer. Interacts with PLDDELTA. Binds to DPB3-1/NF-YC10 in response to heat-stress; this interaction promotes DPB3-1/NF-YC10 DNA-binding ability to its target promoter. S-glutathionylation at Cys-156 in the presence of oxidized glutathione (GSSG). S-nitrosylation at Cys-156 and Cys-160 in the presence of S-nitrosoglutathione (GSNO) or sodium nitroprusside (SNP). These reactions may be both a protective mechanism against irreversible oxidation and a mean to store inhibited enzyme in a recoverable form.

Its subcellular location is the cytoplasm. It is found in the nucleus. It carries out the reaction D-glyceraldehyde 3-phosphate + phosphate + NAD(+) = (2R)-3-phospho-glyceroyl phosphate + NADH + H(+). It functions in the pathway carbohydrate degradation; glycolysis; pyruvate from D-glyceraldehyde 3-phosphate: step 1/5. Its activity is regulated as follows. Inhibition by oxidized glutathione (GSSG), S-nitrosoglutathione (GSNO) and hydrogen peroxide. Key enzyme in glycolysis that catalyzes the first step of the pathway by converting D-glyceraldehyde 3-phosphate (G3P) into 3-phospho-D-glyceroyl phosphate. Essential for the maintenance of cellular ATP levels and carbohydrate metabolism. Binds DNA in vitro. Together with DNA polymerase II subunit B3-1 (DPB3-1) and GAPC1, enhances heat tolerance and promotes the expression of heat-inducible genes. In Arabidopsis thaliana (Mouse-ear cress), this protein is Glyceraldehyde-3-phosphate dehydrogenase GAPC2, cytosolic.